A 207-amino-acid polypeptide reads, in one-letter code: Thiamine-phosphate synthase (207 aa).

4-amino-2-methyl-5-(diphosphooxymethyl)pyrimidine contacts are provided by residues 37–41 and Asn-69; that span reads QYRDK. Mg(2+) is bound by residues Asp-70 and Asp-89. A 4-amino-2-methyl-5-(diphosphooxymethyl)pyrimidine-binding site is contributed by Ser-108. 135 to 137 provides a ligand contact to 2-[(2R,5Z)-2-carboxy-4-methylthiazol-5(2H)-ylidene]ethyl phosphate; it reads SRT. Lys-138 provides a ligand contact to 4-amino-2-methyl-5-(diphosphooxymethyl)pyrimidine. A 2-[(2R,5Z)-2-carboxy-4-methylthiazol-5(2H)-ylidene]ethyl phosphate-binding site is contributed by Gly-164.

Belongs to the thiamine-phosphate synthase family. The cofactor is Mg(2+).

The catalysed reaction is 2-[(2R,5Z)-2-carboxy-4-methylthiazol-5(2H)-ylidene]ethyl phosphate + 4-amino-2-methyl-5-(diphosphooxymethyl)pyrimidine + 2 H(+) = thiamine phosphate + CO2 + diphosphate. It catalyses the reaction 2-(2-carboxy-4-methylthiazol-5-yl)ethyl phosphate + 4-amino-2-methyl-5-(diphosphooxymethyl)pyrimidine + 2 H(+) = thiamine phosphate + CO2 + diphosphate. It carries out the reaction 4-methyl-5-(2-phosphooxyethyl)-thiazole + 4-amino-2-methyl-5-(diphosphooxymethyl)pyrimidine + H(+) = thiamine phosphate + diphosphate. The protein operates within cofactor biosynthesis; thiamine diphosphate biosynthesis; thiamine phosphate from 4-amino-2-methyl-5-diphosphomethylpyrimidine and 4-methyl-5-(2-phosphoethyl)-thiazole: step 1/1. Functionally, condenses 4-methyl-5-(beta-hydroxyethyl)thiazole monophosphate (THZ-P) and 2-methyl-4-amino-5-hydroxymethyl pyrimidine pyrophosphate (HMP-PP) to form thiamine monophosphate (TMP). In Chromobacterium violaceum (strain ATCC 12472 / DSM 30191 / JCM 1249 / CCUG 213 / NBRC 12614 / NCIMB 9131 / NCTC 9757 / MK), this protein is Thiamine-phosphate synthase.